The following is a 92-amino-acid chain: Dynein light chain 1, cytoplasmic (92 aa).

It belongs to the dynein light chain family. As to quaternary structure, homodimer. Cytoplasmic dynein consists of two catalytic heavy chains (HCs) and a number of non-catalytic subunits which present intermediate chains (ICs), light intermediate chains (LICs) and light chains (LCs). Component of the nuclear pore complex (NPC). NPC constitutes the exclusive means of nucleocytoplasmic transport. NPCs allow the passive diffusion of ions and small molecules and the active, nuclear transport receptor-mediated bidirectional transport of macromolecules such as proteins, RNAs, ribonucleoparticles (RNPs), and ribosomal subunits across the nuclear envelope. Due to its 8-fold rotational symmetry, all subunits are present with 8 copies or multiples thereof. Part of the NUP82 subcomplex. In the complex, interacts directly with Nup159.

It localises to the cytoplasm. The protein localises to the cytoskeleton. It is found in the nucleus. Its subcellular location is the nuclear pore complex. Functionally, acts as one of several non-catalytic accessory components of the cytoplasmic dynein complex that are thought to be involved in linking dynein to cargos and to adapter proteins that regulate dynein function. Cytoplasmic dynein 1 acts as a motor for the intracellular retrograde motility of vesicles and organelles along microtubules. May play a role in changing or maintaining the spatial distribution of cytoskeletal structures. Also a component of the nuclear pore complex where it may contribute to the stable association of the Nup82 subcomplex with the NPC. In Saccharomyces cerevisiae (strain ATCC 204508 / S288c) (Baker's yeast), this protein is Dynein light chain 1, cytoplasmic (DYN2).